Here is a 149-residue protein sequence, read N- to C-terminus: Large ribosomal subunit protein bL9 (149 aa).

It belongs to the bacterial ribosomal protein bL9 family.

Its function is as follows. Binds to the 23S rRNA. This is Large ribosomal subunit protein bL9 from Stenotrophomonas maltophilia (strain K279a).